The sequence spans 148 residues: Deoxyuridine 5'-triphosphate nucleotidohydrolase (148 aa).

Substrate-binding positions include 67–69, N80, 84–86, and M94; these read RSG and LID.

It belongs to the dUTPase family. It depends on Mg(2+) as a cofactor.

It catalyses the reaction dUTP + H2O = dUMP + diphosphate + H(+). It functions in the pathway pyrimidine metabolism; dUMP biosynthesis; dUMP from dCTP (dUTP route): step 2/2. Functionally, this enzyme is involved in nucleotide metabolism: it produces dUMP, the immediate precursor of thymidine nucleotides and it decreases the intracellular concentration of dUTP so that uracil cannot be incorporated into DNA. The sequence is that of Deoxyuridine 5'-triphosphate nucleotidohydrolase from Burkholderia lata (strain ATCC 17760 / DSM 23089 / LMG 22485 / NCIMB 9086 / R18194 / 383).